The sequence spans 261 residues: Eukaryotic translation initiation factor 3 subunit G (261 aa).

The disordered stretch occupies residues 156-180 (QDADSKNALGLRGDGRQMERNRSDE). Residues 168 to 180 (GDGRQMERNRSDE) show a composition bias toward basic and acidic residues. The RRM domain occupies 181–259 (NTCRVTNLPQ…MVLKVEWTRP (79 aa)).

This sequence belongs to the eIF-3 subunit G family. As to quaternary structure, component of the eukaryotic translation initiation factor 3 (eIF-3) complex.

The protein localises to the cytoplasm. Its function is as follows. RNA-binding component of the eukaryotic translation initiation factor 3 (eIF-3) complex, which is involved in protein synthesis of a specialized repertoire of mRNAs and, together with other initiation factors, stimulates binding of mRNA and methionyl-tRNAi to the 40S ribosome. The eIF-3 complex specifically targets and initiates translation of a subset of mRNAs involved in cell proliferation. This subunit can bind 18S rRNA. In Caenorhabditis briggsae, this protein is Eukaryotic translation initiation factor 3 subunit G.